Reading from the N-terminus, the 62-residue chain is Sperm protamine P1 (62 aa).

Residues 1-62 form a disordered region; that stretch reads MARYRRRSRS…RYSRRGRRRY (62 aa).

It belongs to the protamine P1 family. Testis.

The protein resides in the nucleus. It localises to the chromosome. Its function is as follows. Protamines substitute for histones in the chromatin of sperm during the haploid phase of spermatogenesis. They compact sperm DNA into a highly condensed, stable and inactive complex. The protein is Sperm protamine P1 (PRM1) of Sarcophilus harrisii (Tasmanian devil).